A 359-amino-acid chain; its full sequence is 4-hydroxy-tetrahydrodipicolinate synthase, chloroplastic (359 aa).

Residues 1–33 constitute a chloroplast transit peptide; that stretch reads MSSSIIGRCHFVADSIEAAGTKRRTTRWRSPRA. A pyruvate-binding site is contributed by Thr-102. The Proton donor/acceptor role is filled by Tyr-188. Lys-216 functions as the Schiff-base intermediate with substrate in the catalytic mechanism. A pyruvate-binding site is contributed by Ile-255.

Belongs to the DapA family.

The protein localises to the plastid. Its subcellular location is the chloroplast. The enzyme catalyses L-aspartate 4-semialdehyde + pyruvate = (2S,4S)-4-hydroxy-2,3,4,5-tetrahydrodipicolinate + H2O + H(+). The protein operates within amino-acid biosynthesis; L-lysine biosynthesis via DAP pathway; (S)-tetrahydrodipicolinate from L-aspartate: step 3/4. Catalyzes the condensation of (S)-aspartate-beta-semialdehyde [(S)-ASA] and pyruvate to 4-hydroxy-tetrahydrodipicolinate (HTPA). The protein is 4-hydroxy-tetrahydrodipicolinate synthase, chloroplastic (DHPS1) of Nicotiana tabacum (Common tobacco).